Consider the following 319-residue polypeptide: Olfactory receptor 8K1 (319 aa).

The Extracellular segment spans residues 1-31 (MNHVVKHNHTAVTKVTEFILMGITDNPGLQA). A glycan (N-linked (GlcNAc...) asparagine) is linked at asparagine 8. Residues 32-52 (PLFGLFLIIYLVTVIGNLGMV) traverse the membrane as a helical segment. Residues 53-60 (ILTYLDSK) lie on the Cytoplasmic side of the membrane. Residues 61–81 (LHTPMYFFLRHLSITDLGYST) traverse the membrane as a helical segment. Over 82-105 (VIAPKMLVNFIVHKNTISYNWYAT) the chain is Extracellular. Residues 106–126 (QLAFFEIFIISELFILSAMAY) form a helical membrane-spanning segment. The Cytoplasmic portion of the chain corresponds to 127–145 (DRYVAICKPLLYVIIMAEK). A helical transmembrane segment spans residues 146–166 (VLWVLVIVPYLYSTFVSLFLT). Residues 167-203 (IKLFKLSFCGSNIISYFYCDCIPLMSILCSDTNELEL) are Extracellular-facing. The helical transmembrane segment at 204 to 223 (IILIFSGCNLLFSLSIVLIS) threads the bilayer. The Cytoplasmic segment spans residues 224–243 (YMFILVAILRMNSRKGRYKA). The chain crosses the membrane as a helical span at residues 244–264 (FSTCSSHLTVVIMFYGTLLFI). At 265 to 277 (YLQPKSSHTLAID) the chain is on the extracellular side. A helical transmembrane segment spans residues 278-298 (KMASVFYTLLIPMLNPLIYSL). Residues 299 to 319 (RNKEVKDALKRTLTNRFKIPI) lie on the Cytoplasmic side of the membrane.

It belongs to the G-protein coupled receptor 1 family.

It localises to the cell membrane. Odorant receptor. This Homo sapiens (Human) protein is Olfactory receptor 8K1 (OR8K1).